The following is a 140-amino-acid chain: Large ribosomal subunit protein bL17 (140 aa).

The protein belongs to the bacterial ribosomal protein bL17 family. Part of the 50S ribosomal subunit. Contacts protein L32.

The sequence is that of Large ribosomal subunit protein bL17 from Rhizorhabdus wittichii (strain DSM 6014 / CCUG 31198 / JCM 15750 / NBRC 105917 / EY 4224 / RW1) (Sphingomonas wittichii).